A 472-amino-acid polypeptide reads, in one-letter code: 3-isopropylmalate dehydratase large subunit (472 aa).

Residues cysteine 347, cysteine 409, and cysteine 412 each coordinate [4Fe-4S] cluster.

This sequence belongs to the aconitase/IPM isomerase family. LeuC type 1 subfamily. Heterodimer of LeuC and LeuD. Requires [4Fe-4S] cluster as cofactor.

The catalysed reaction is (2R,3S)-3-isopropylmalate = (2S)-2-isopropylmalate. Its pathway is amino-acid biosynthesis; L-leucine biosynthesis; L-leucine from 3-methyl-2-oxobutanoate: step 2/4. Catalyzes the isomerization between 2-isopropylmalate and 3-isopropylmalate, via the formation of 2-isopropylmaleate. This is 3-isopropylmalate dehydratase large subunit from Salinibacter ruber (strain DSM 13855 / M31).